We begin with the raw amino-acid sequence, 405 residues long: Arrestin red cell isoform 2 (405 aa).

Belongs to the arrestin family.

Its subcellular location is the cytoplasm. The chain is Arrestin red cell isoform 2 from Oncorhynchus mykiss (Rainbow trout).